A 421-amino-acid chain; its full sequence is ATP-dependent RNA helicase RhlB (421 aa).

The short motif at 9-37 is the Q motif element; that stretch reads QKFSDFALHPKVVEALEKKGFHNCTPIQA. The Helicase ATP-binding domain maps to 40-219; that stretch reads LPLTLAGRDV…FEQMNNAEYI (180 aa). 53-60 is an ATP binding site; sequence AQTGTGKT. Residues 165-168 carry the DEAD box motif; sequence DEAD. One can recognise a Helicase C-terminal domain in the interval 245–390; it reads RLLQTLIEEE…VSKYNPDALM (146 aa). Positions 392-421 are disordered; that stretch reads DLPKPLRLTRPRTGNGPRRTGAPRNRRRSG. Low complexity predominate over residues 402-414; that stretch reads PRTGNGPRRTGAP.

The protein belongs to the DEAD box helicase family. RhlB subfamily. As to quaternary structure, component of the RNA degradosome, which is a multiprotein complex involved in RNA processing and mRNA degradation.

The protein localises to the cytoplasm. The enzyme catalyses ATP + H2O = ADP + phosphate + H(+). Functionally, DEAD-box RNA helicase involved in RNA degradation. Has RNA-dependent ATPase activity and unwinds double-stranded RNA. The protein is ATP-dependent RNA helicase RhlB of Escherichia coli (strain SMS-3-5 / SECEC).